We begin with the raw amino-acid sequence, 303 residues long: Mitochondrial carrier homolog 2 (303 aa).

Residue Ala2 is modified to N-acetylalanine. At 2-15 the chain is on the mitochondrial intermembrane side; it reads ADAASQVLLGSGLT. Solcar repeat units follow at residues 2–98 and 118–206; these read ADAA…YQES and DHVI…VNTY. A helical membrane pass occupies residues 16–36; it reads ILSQPLMYVKVLIQVGYEPLP. At 37-77 the chain is on the cytoplasmic side; the sequence is PTIGRNIFGRQVCQLPGLFSYAQHIASIDGRRGLFTGLTPR. A helical membrane pass occupies residues 78 to 92; that stretch reads LCSGVLGTVVHGKVL. At 93–135 the chain is on the mitochondrial intermembrane side; that stretch reads QHYQESDKGEELGPGNVQKEVSSSFDHVIKETTREMIARSAAT. A helical membrane pass occupies residues 136 to 156; sequence LITHPFHVITLRSMVQFIGRE. Residues 157 to 180 are Cytoplasmic-facing; that stretch reads SKYCGLCDSIITIYREEGILGFFA. A helical transmembrane segment spans residues 181–199; it reads GLVPRLLGDILSLWLCNSL. Topologically, residues 200 to 231 are mitochondrial intermembrane; sequence AYLVNTYALDSGVSTMNEMKSYSQAVTGFFAS. The helical transmembrane segment at 232–252 threads the bilayer; the sequence is MLTYPFVLVSNLMAVNNCGLA. Topologically, residues 253-280 are cytoplasmic; the sequence is GGCPPYSPIYTSWIDCWCMLQKEGNMSR. Residues 281 to 303 form a helical membrane-spanning segment; it reads GNSLFFRKVPFGKTYCCDLKMLI.

It belongs to the mitochondrial carrier (TC 2.A.29) family. In terms of assembly, interacts with p15BID.

It is found in the mitochondrion outer membrane. Functionally, protein insertase that mediates insertion of transmembrane proteins into the mitochondrial outer membrane. Catalyzes insertion of proteins with alpha-helical transmembrane regions, such as signal-anchored, tail-anchored and multi-pass membrane proteins. Does not mediate insertion of beta-barrel transmembrane proteins. Also acts as a receptor for the truncated form of pro-apoptotic BH3-interacting domain death agonist (p15 BID) and has therefore a critical function in apoptosis. Regulates the quiescence/cycling of hematopoietic stem cells (HSCs). Acts as a regulator of mitochondrial fusion, essential for the naive-to-primed interconversion of embryonic stem cells (ESCs). Acts as a regulator of lipid homeostasis and has a regulatory role in adipocyte differentiation and biology. The chain is Mitochondrial carrier homolog 2 from Homo sapiens (Human).